A 193-amino-acid polypeptide reads, in one-letter code: Thymidine kinase (193 aa).

Residues 9 to 16 (ASMNAGKS) and 87 to 90 (DEAQ) each bind ATP. Glu88 (proton acceptor) is an active-site residue. The Zn(2+) site is built by Cys145, Cys147, Cys182, and His185.

This sequence belongs to the thymidine kinase family. Homotetramer.

It localises to the cytoplasm. It catalyses the reaction thymidine + ATP = dTMP + ADP + H(+). The protein is Thymidine kinase of Zymomonas mobilis subsp. mobilis (strain ATCC 31821 / ZM4 / CP4).